Here is a 1189-residue protein sequence, read N- to C-terminus: MVPCWNHGNITRSKAEELLSRTGKDGSFLVRASESISRAYALCVLYRNCVYTYRILPNEDDKFTVQASEGVSMRFFTKLDQLIEFYKKENMGLVTHLQYPVPLEEEDTGDDPEEDTVESVVSPPELPPRNIPLTASSCEAKEVPFSNENPRATETSRPSLSETLFQRLQSMDTSGLPEEHLKAIQDYLSTQLAQDSEFVKTGSSSLPHLKKLTTLLCKELYGEVIRTLPSLESLQRLFDQQLSPGLRPRPQVPGEANPINMVSKLSQLTSLLSSIEDKVKALLHEGPESPHRPSLIPPVTFEVKAESLGIPQKMQLKVDVESGKLIIKKSKDGSEDKFYSHKKILQLIKSQKFLNKLVILVETEKEKILRKEYVFADSKKREGFCQLLQQMKNKHSEQPEPDMITIFIGTWNMGNAPPPKKITSWFLSKGQGKTRDDSADYIPHDIYVIGTQEDPLSEKEWLEILKHSLQEITSVTFKTVAIHTLWNIRIVVLAKPEHENRISHICTDNVKTGIANTLGNKGAVGVSFMFNGTSLGFVNSHLTSGSEKKLRRNQNYMNILRFLALGDKKLSPFNITHRFTHLFWFGDLNYRVDLPTWEAETIIQKIKQQQYADLLSHDQLLTERREQKVFLHFEEEEITFAPTYRFERLTRDKYAYTKQKATGMKYNLPSWCDRVLWKSYPLVHVVCQSYGSTSDIMTSDHSPVFATFEAGVTSQFVSKNGPGTVDSQGQIEFLRCYATLKTKSQTKFYLEFHSSCLESFVKSQEGENEEGSEGELVVKFGETLPKLKPIISDPEYLLDQHILISIKSSDSDESYGEGCIALRLEATETQLPIYTPLTHHGELTGHFQGEIKLQTSQGKTREKLYDFVKTERDESSGPKTLKSLTSHDPMKQWEVTSRAPPCSGSSITEIINPNYMGVGPFGPPMPLHVKQTLSPDQQPTAWSYDQPPKDSPLGPCRGESPPTPPGQPPISPKKFLPSTANRGLPPRTQESRPSDLGKNAGDTLPQEDLPLTKPEMFENPLYGSLSSFPKPAPRKDQESPKMPRKEPPPCPEPGILSPSIVLTKAQEADRGEGPGKQVPAPRLRSFTCSSSAEGRAAGGDKSQGKPKTPVSSQAPVPAKRPIKPSRSEINQQTPPTPTPRPPLPVKSPAVLHLQHSKGRDYRDNTELPHHGKHRPEEGPPGPLGRTAMQ.

The SH2 domain maps to 5–101 (WNHGNITRSK…GLVTHLQYPV (97 aa)). The segment covering 103 to 117 (LEEEDTGDDPEEDTV) has biased composition (acidic residues). Residues 103–132 (LEEEDTGDDPEEDTVESVVSPPELPPRNIP) form a disordered region. An SH3-binding 1 motif is present at residues 124–129 (PELPPR). Serine 243 is subject to Phosphoserine. A disordered region spans residues 870–906 (TERDESSGPKTLKSLTSHDPMKQWEVTSRAPPCSGSS). Residues 912–915 (NPNY) carry the NPXY motif 1 motif. The residue at position 915 (tyrosine 915) is a Phosphotyrosine. Residues 922–1189 (GPPMPLHVKQ…PGPLGRTAMQ (268 aa)) are disordered. Over residues 931–943 (QTLSPDQQPTAWS) the composition is skewed to polar residues. Serine 934 is modified (phosphoserine). Tyrosine 944 carries the post-translational modification Phosphotyrosine. Serine 960 carries the post-translational modification Phosphoserine. Over residues 961–971 (PPTPPGQPPIS) the composition is skewed to pro residues. Threonine 963 is subject to Phosphothreonine. The SH3-binding 2 signature appears at 969–974 (PISPKK). A Phosphoserine modification is found at serine 971. The segment at 1016 to 1030 (MFENPLYGSLSSFPK) is interaction with DAB2. An NPXY motif 2 motif is present at residues 1019–1022 (NPLY). Tyrosine 1022 carries the phosphotyrosine modification. The segment covering 1033-1047 (PRKDQESPKMPRKEP) has biased composition (basic and acidic residues). An SH3-binding 3 motif is present at residues 1040 to 1051 (PKMPRKEPPPCP). Positions 1134 to 1145 (PPTPTPRPPLPV) are enriched in pro residues. Residues 1157-1177 (KGRDYRDNTELPHHGKHRPEE) show a composition bias toward basic and acidic residues.

This sequence belongs to the inositol 1,4,5-trisphosphate 5-phosphatase family. Interacts with tyrosine phosphorylated form of SHC1. Interacts with tyrosine phosphorylated form of DOK1. Interacts with tyrosine phosphorylated form of DOK3. Interacts with tyrosine phosphorylated form of SLAMF1/CD150. Interacts with PTPN11 in response to IL-3. Interacts with receptor EPOR. Interacts with receptors MS4A2/FCER1B and FCER1G. Interacts with receptors FCGR2B and FCGR3. Interacts with receptor FCGR2A, leading to regulate gene expression during the phagocytic process. Interacts with GRB2. Interacts with PLCG1. Interacts with tyrosine kinases SRC and TEC. Interacts with c-Met/MET. Interacts with MILR1 (tyrosine-phosphorylated). Can weakly interact (via NPXY motif 2) with DAB2 (via PID domain); the interaction is impaired by tyrosine phosphorylation of the NPXY motif. Interacts with FCRL3 and FCRL6 (tyrosine phosphorylated form). Interacts (via SH2 domain) with tyrosine phosphorylated KLRC1 (via ITIM). Interacts with MPL/TPOR. Post-translationally, tyrosine phosphorylated by the members of the SRC family after exposure to a diverse array of extracellular stimuli such as cytokines, growth factors, antibodies, chemokines, integrin ligands and hypertonic and oxidative stress. Phosphorylated upon IgG receptor FCGR2B-binding. In terms of tissue distribution, specifically expressed in immune and hematopoietic cells. Expressed in bone marrow and blood cells. Levels vary considerably within this compartment. Present in at least 74% of immature CD34+ cells, whereas within the more mature population of CD33+ cells, it is present in only 10% of cells. Present in the majority of T-cells, while it is present in a minority of B-cells (at protein level).

It is found in the cytoplasm. It localises to the cell membrane. The protein resides in the membrane raft. The protein localises to the cytoskeleton. Its subcellular location is the membrane. It catalyses the reaction a 1,2-diacyl-sn-glycero-3-phospho-(1D-myo-inositol-3,4,5-trisphosphate) + H2O = a 1,2-diacyl-sn-glycero-3-phospho-(1D-myo-inositol-3,4-bisphosphate) + phosphate. It carries out the reaction 1D-myo-inositol 1,3,4,5-tetrakisphosphate + H2O = 1D-myo-inositol 1,3,4-trisphosphate + phosphate. The enzyme catalyses a 1,2-diacyl-sn-glycero-3-phospho-(1D-myo-inositol-4,5-bisphosphate) + H2O = a 1,2-diacyl-sn-glycero-3-phospho-(1D-myo-inositol 4-phosphate) + phosphate. With respect to regulation, activated upon translocation to the sites of synthesis of PtdIns(3,4,5)P3 in the membrane. In terms of biological role, phosphatidylinositol (PtdIns) phosphatase that specifically hydrolyzes the 5-phosphate of phosphatidylinositol-3,4,5-trisphosphate (PtdIns(3,4,5)P3) to produce PtdIns(3,4)P2, thereby negatively regulating the PI3K (phosphoinositide 3-kinase) pathways. Able also to hydrolyzes the 5-phosphate of phosphatidylinositol-4,5-bisphosphate (PtdIns(4,5)P3) and inositol 1,3,4,5-tetrakisphosphate. Acts as a negative regulator of B-cell antigen receptor signaling. Mediates signaling from the FC-gamma-RIIB receptor (FCGR2B), playing a central role in terminating signal transduction from activating immune/hematopoietic cell receptor systems. Acts as a negative regulator of myeloid cell proliferation/survival and chemotaxis, mast cell degranulation, immune cells homeostasis, integrin alpha-IIb/beta-3 signaling in platelets and JNK signaling in B-cells. Regulates proliferation of osteoclast precursors, macrophage programming, phagocytosis and activation and is required for endotoxin tolerance. Involved in the control of cell-cell junctions, CD32a signaling in neutrophils and modulation of EGF-induced phospholipase C activity. Key regulator of neutrophil migration, by governing the formation of the leading edge and polarization required for chemotaxis. Modulates FCGR3/CD16-mediated cytotoxicity in NK cells. Mediates the activin/TGF-beta-induced apoptosis through its Smad-dependent expression. In Homo sapiens (Human), this protein is Phosphatidylinositol 3,4,5-trisphosphate 5-phosphatase 1 (INPP5D).